The following is a 447-amino-acid chain: Trigger factor (447 aa).

In terms of domain architecture, PPIase FKBP-type spans 164-249 (GNQVTFDFEG…VKLVEKSKLP (86 aa)).

This sequence belongs to the FKBP-type PPIase family. Tig subfamily.

The protein localises to the cytoplasm. The catalysed reaction is [protein]-peptidylproline (omega=180) = [protein]-peptidylproline (omega=0). In terms of biological role, involved in protein export. Acts as a chaperone by maintaining the newly synthesized protein in an open conformation. Functions as a peptidyl-prolyl cis-trans isomerase. The protein is Trigger factor of Psychrobacter cryohalolentis (strain ATCC BAA-1226 / DSM 17306 / VKM B-2378 / K5).